The following is a 160-amino-acid chain: Transcriptional regulator MraZ (160 aa).

SpoVT-AbrB domains are found at residues 5–50 (KFET…EGVY) and 93–136 (AIEC…SQAE).

The protein belongs to the MraZ family. Forms oligomers.

It is found in the cytoplasm. Its subcellular location is the nucleoid. The protein is Transcriptional regulator MraZ of Geotalea uraniireducens (strain Rf4) (Geobacter uraniireducens).